We begin with the raw amino-acid sequence, 269 residues long: 5'-nucleotidase SurE (269 aa).

A divalent metal cation is bound by residues Asp-11, Asp-12, Ser-43, and Asn-101.

Belongs to the SurE nucleotidase family. The cofactor is a divalent metal cation.

The protein localises to the cytoplasm. It catalyses the reaction a ribonucleoside 5'-phosphate + H2O = a ribonucleoside + phosphate. Nucleotidase that shows phosphatase activity on nucleoside 5'-monophosphates. This is 5'-nucleotidase SurE from Prochlorococcus marinus subsp. pastoris (strain CCMP1986 / NIES-2087 / MED4).